A 455-amino-acid polypeptide reads, in one-letter code: Adhesin YadA (455 aa).

Positions 1 to 25 (MTKDFKISVSAALISALFSSPYAFA) are cleaved as a signal peptide. Residues 26 to 363 (DDYDGIPNLT…KKAIRESNQY (338 aa)) are surface exposed passenger domain. Positions 209–243 (VNVAQLKKEIEKTQENTNKRSAELLANANAYADNK) form a coiled coil. The tract at residues 364-402 (TDHKFRQLDNRLDKLDTRVDKGLASSAALNSLFQPYGVG) is outer membrane translocation of the passenger domain. Transmembrane regions (beta stranded) follow at residues 402–412 (GKVNFTAGVGG), 416–427 (SQALAIGSGYRV), 434–440 (KAGVAYA), and 444–455 (DVMYNASFNIEW). Positions 403-455 (KVNFTAGVGGYRSSQALAIGSGYRVNENVALKAGVAYAGSSDVMYNASFNIEW) are translocator domain.

This sequence belongs to the autotransporter-2 (AT-2) (TC 1.B.40) family. In terms of assembly, homotrimer; in gels migrates as monomers, dimers and homotrimers. Does not form trimers with distantly related EibA from E.coli; coexpression was lethal and one of the genes is eliminated in vivo. If the full translocator domain (368-455) is exchanged with that of EibA ('299-392'), will form heterotrimers with EibA and vice-versa.

It localises to the cell surface. It is found in the cell outer membrane. In terms of biological role, collagen-binding outer membrane protein forming a fibrillar matrix on the bacterial cell surface. Promotes initial attachment and invasion of eukaryotic cells. Also protects the bacteria by being responsible for agglutination, serum resistance, complement inactivation and phagocytosis resistance. In Yersinia enterocolitica, this protein is Adhesin YadA (yadA).